Reading from the N-terminus, the 443-residue chain is D-serine dehydratase (443 aa).

The residue at position 118 (lysine 118) is an N6-(pyridoxal phosphate)lysine.

Belongs to the serine/threonine dehydratase family. DsdA subfamily. As to quaternary structure, monomer. Requires pyridoxal 5'-phosphate as cofactor.

It carries out the reaction D-serine = pyruvate + NH4(+). This Photorhabdus laumondii subsp. laumondii (strain DSM 15139 / CIP 105565 / TT01) (Photorhabdus luminescens subsp. laumondii) protein is D-serine dehydratase.